Here is a 162-residue protein sequence, read N- to C-terminus: MSTNIITTEGHEALKKELDHLWRVYRPEITQKVAWAASLGDRSENADYQYNKKLLREIDRRVRYLRKRLEDVKVVAYSPEQEGKVFFGAWVEIENDEGETMKFRIVGYDEIYGRNDYISIDSPMARALLKKEEGDEVVVHTPTGEATWYVSSIRYGQGVSTD.

Residues 52–73 adopt a coiled-coil conformation; that stretch reads KKLLREIDRRVRYLRKRLEDVK.

The protein belongs to the GreA/GreB family. GreB subfamily.

Necessary for efficient RNA polymerase transcription elongation past template-encoded arresting sites. The arresting sites in DNA have the property of trapping a certain fraction of elongating RNA polymerases that pass through, resulting in locked ternary complexes. Cleavage of the nascent transcript by cleavage factors such as GreA or GreB allows the resumption of elongation from the new 3'terminus. GreB releases sequences of up to 9 nucleotides in length. This Pseudomonas putida (strain ATCC 47054 / DSM 6125 / CFBP 8728 / NCIMB 11950 / KT2440) protein is Transcription elongation factor GreB.